The sequence spans 376 residues: Nuclear egress protein 1 (376 aa).

Residue serine 19 is modified to Phosphoserine. Residues 22-57 are disordered; sequence RKRRQRELASKVASTVNGATSANNHGEPPSPADARP. The segment covering 33–45 has biased composition (polar residues); that stretch reads VASTVNGATSANN. The segment at 106 to 211 adopts a CCCH-type zinc-finger fold; it reads CLDISPYGNE…HVIFENSDVH (106 aa). Residues 316 to 376 form a disordered region; it reads VVSTNGCGPS…PLFLNSIRAP (61 aa). Residues 317 to 332 show a composition bias toward polar residues; it reads VSTNGCGPSSSSQSTP.

This sequence belongs to the herpesviridae NEC1 protein family. In terms of assembly, forms a heterohexameric complex with NEC2. Interacts with capsid vertex specific component 2/CVC2; this interaction directs the capsid to the host inner nuclear membrane to initiate budding. Post-translationally, phosphorylated at serine residues in the N-terminus. This phosphorylation regulates the localization within the inner nuclear membrane. Phosphorylation by viral kinase UL97 at Ser-19 plays an important role for correct viral nuclear egress complex (NEC) localization.

It is found in the host nucleus inner membrane. Its function is as follows. Plays an essential role in virion nuclear egress, the first step of virion release from infected cell. Within the host nucleus, NEC1 interacts with the newly formed capsid through the vertexes and directs it to the inner nuclear membrane by associating with NEC2. Induces the budding of the capsid at the inner nuclear membrane as well as its envelopment into the perinuclear space. There, the NEC1/NEC2 complex promotes the fusion of the enveloped capsid with the outer nuclear membrane and the subsequent release of the viral capsid into the cytoplasm where it will reach the secondary budding sites in the host Golgi or trans-Golgi network. The sequence is that of Nuclear egress protein 1 from Homo sapiens (Human).